Here is an 86-residue protein sequence, read N- to C-terminus: RNA-binding protein Hfq (86 aa).

Positions D9 to V68 constitute a Sm domain. Residues R66–A86 are disordered. The segment covering D75 to A86 has biased composition (basic and acidic residues).

It belongs to the Hfq family. Homohexamer.

Functionally, RNA chaperone that binds small regulatory RNA (sRNAs) and mRNAs to facilitate mRNA translational regulation in response to envelope stress, environmental stress and changes in metabolite concentrations. Also binds with high specificity to tRNAs. This chain is RNA-binding protein Hfq, found in Pseudomonas putida (strain ATCC 700007 / DSM 6899 / JCM 31910 / BCRC 17059 / LMG 24140 / F1).